A 331-amino-acid chain; its full sequence is Germ cell-specific gene 1-like protein (331 aa).

Residues 1–8 (MKTSRRGR) are Cytoplasmic-facing. Residues 9–29 (ALLAVALNLLALLFATTAFLT) form a helical membrane-spanning segment. Residues 30-132 (THWCQGTQRV…FIDLAPASEK (103 aa)) lie on the Extracellular side of the membrane. Residues 133–153 (GVLWLSVVSEVLYILLLVVGF) traverse the membrane as a helical segment. Over 154–173 (SLMCLELFHSSNVIDGLKLN) the chain is Cytoplasmic. A helical membrane pass occupies residues 174-194 (AFAAVFTVLSGLLGMVAHMMY). The Extracellular portion of the chain corresponds to 195 to 217 (TQVFQVTVSLGPEDWRPHSWDYG). The chain crosses the membrane as a helical span at residues 218-238 (WSFCLAWGSFTCCMAASVTTL). Residues 239–331 (NSYTKTVIEF…RQCWVLGHWV (93 aa)) are Cytoplasmic-facing.

This sequence belongs to the GSG1 family. Component of the inner core of AMPAR complex. AMPAR complex consists of an inner core made of 4 pore-forming GluA/GRIA proteins (GRIA1, GRIA2, GRIA3 and GRIA4) and 4 major auxiliary subunits arranged in a twofold symmetry. One of the two pairs of distinct binding sites is occupied either by CNIH2, CNIH3 or CACNG2, CACNG3. The other harbors CACNG2, CACNG3, CACNG4, CACNG8 or GSG1L. This inner core of AMPAR complex is complemented by outer core constituents binding directly to the GluA/GRIA proteins at sites distinct from the interaction sites of the inner core constituents. Outer core constituents include at least PRRT1, PRRT2, CKAMP44/SHISA9, FRRS1L and NRN1. The proteins of the inner and outer core serve as a platform for other, more peripherally associated AMPAR constituents. Alone or in combination, these auxiliary subunits control the gating and pharmacology of the AMPAR complex and profoundly impact their biogenesis and protein processing.

The protein localises to the cell membrane. Its subcellular location is the synapse. Its function is as follows. As a component of the inner core of AMPAR complex, modifies AMPA receptor (AMPAR) gating. The polypeptide is Germ cell-specific gene 1-like protein (GSG1L) (Homo sapiens (Human)).